The sequence spans 675 residues: PTS system glucose-specific EIICBA component (675 aa).

Positions 3-414 (KKLFGQLQRI…FNFKTPGRED (412 aa)) constitute a PTS EIIC type-1 domain. Transmembrane regions (helical) follow at residues 16-36 (LMLP…GTAF), 59-79 (MMTG…ALGV), 81-101 (IGLA…FIIM), 126-146 (VLGI…GALA), 173-193 (IMMA…WPFI), 199-219 (AFST…FGFI), 273-293 (FMQG…LAIY), 303-323 (VVGG…ITEP), 328-348 (FLFV…LSFL), 355-375 (LHLG…GILP), and 378-398 (TPWW…YVVF). The 82-residue stretch at 425 to 506 (SKLPFDVLDA…ARIMNGDITK (82 aa)) folds into the PTS EIIB type-1 domain. The active-site Phosphocysteine intermediate; for EIIB activity is the C447. A PTS EIIA type-1 domain is found at 547–651 (DKVFSEKMMG…SVVTPVIITN (105 aa)). Catalysis depends on H599, which acts as the Tele-phosphohistidine intermediate; for EIIA activity.

It localises to the cell membrane. It catalyses the reaction N(pros)-phospho-L-histidyl-[protein] + D-glucose(out) = D-glucose 6-phosphate(in) + L-histidyl-[protein]. The phosphoenolpyruvate-dependent sugar phosphotransferase system (sugar PTS), a major carbohydrate active transport system, catalyzes the phosphorylation of incoming sugar substrates concomitantly with their translocation across the cell membrane. This system is involved in glucose transport. This chain is PTS system glucose-specific EIICBA component (ptsG), found in Staphylococcus haemolyticus (strain JCSC1435).